A 216-amino-acid chain; its full sequence is Thymidylate kinase (216 aa).

Residue 10-17 (GIDGCGKT) participates in ATP binding.

Belongs to the thymidylate kinase family.

It carries out the reaction dTMP + ATP = dTDP + ADP. Its function is as follows. Phosphorylation of dTMP to form dTDP in both de novo and salvage pathways of dTTP synthesis. This chain is Thymidylate kinase, found in Prochlorococcus marinus (strain MIT 9303).